Reading from the N-terminus, the 508-residue chain is UDP-N-acetylmuramoyl-L-alanyl-D-glutamate--2,6-diaminopimelate ligase (508 aa).

Position 29 (Ser-29) interacts with UDP-N-acetyl-alpha-D-muramoyl-L-alanyl-D-glutamate. 112 to 118 (GTNGKTS) serves as a coordination point for ATP. Residues 159–160 (TT), Ser-186, Gln-192, and Arg-194 contribute to the UDP-N-acetyl-alpha-D-muramoyl-L-alanyl-D-glutamate site. Lys-226 is modified (N6-carboxylysine). Meso-2,6-diaminopimelate-binding positions include Arg-398, 421-424 (DNPR), Gly-473, and Glu-477. A Meso-diaminopimelate recognition motif motif is present at residues 421-424 (DNPR).

This sequence belongs to the MurCDEF family. MurE subfamily. Mg(2+) serves as cofactor. Carboxylation is probably crucial for Mg(2+) binding and, consequently, for the gamma-phosphate positioning of ATP.

Its subcellular location is the cytoplasm. It catalyses the reaction UDP-N-acetyl-alpha-D-muramoyl-L-alanyl-D-glutamate + meso-2,6-diaminopimelate + ATP = UDP-N-acetyl-alpha-D-muramoyl-L-alanyl-gamma-D-glutamyl-meso-2,6-diaminopimelate + ADP + phosphate + H(+). The protein operates within cell wall biogenesis; peptidoglycan biosynthesis. In terms of biological role, catalyzes the addition of meso-diaminopimelic acid to the nucleotide precursor UDP-N-acetylmuramoyl-L-alanyl-D-glutamate (UMAG) in the biosynthesis of bacterial cell-wall peptidoglycan. The chain is UDP-N-acetylmuramoyl-L-alanyl-D-glutamate--2,6-diaminopimelate ligase from Janthinobacterium sp. (strain Marseille) (Minibacterium massiliensis).